A 208-amino-acid polypeptide reads, in one-letter code: MIAIKDAHFLTSSGQLSQCPASLTSEMVILGRSNVGKSSFINTLLGKNLAKSSATPGKTRLANFFSTTWEDKENALRATFNVIDLPGFGYAKVSKSLKKEWEGFLWELLSVRVSIKLFIHLVDARHLNLEIDKNAKENIQALLRPDQAYLSLFTKFDKLNKNEQHRLFLNAPKPFLINSAHFNALSSKYPTLEVVRQTLLKYLLTNPL.

The EngB-type G domain maps to 23-205 (LTSEMVILGR…RQTLLKYLLT (183 aa)). GTP-binding positions include 31-38 (GRSNVGKS), 57-61 (GKTRL), 84-87 (DLPG), 154-157 (TKFD), and 182-184 (FNA). Mg(2+) is bound by residues Ser-38 and Thr-59.

It belongs to the TRAFAC class TrmE-Era-EngA-EngB-Septin-like GTPase superfamily. EngB GTPase family. Requires Mg(2+) as cofactor.

In terms of biological role, necessary for normal cell division and for the maintenance of normal septation. In Helicobacter pylori (strain Shi470), this protein is Probable GTP-binding protein EngB.